We begin with the raw amino-acid sequence, 25 residues long: Aggression-stimulating peptide (25 aa).

In terms of tissue distribution, expressed by the skin glands of male frogs.

The protein localises to the secreted. Stimulates aggressive behavior in male frogs. No effect on female frogs. This is Aggression-stimulating peptide from Leptodactylus fallax (Mountain chicken frog).